Reading from the N-terminus, the 107-residue chain is Nucleoid-associated protein RF_1365 (107 aa).

It belongs to the YbaB/EbfC family. Homodimer.

Its subcellular location is the cytoplasm. It is found in the nucleoid. Functionally, binds to DNA and alters its conformation. May be involved in regulation of gene expression, nucleoid organization and DNA protection. This chain is Nucleoid-associated protein RF_1365, found in Rickettsia felis (strain ATCC VR-1525 / URRWXCal2) (Rickettsia azadi).